A 547-amino-acid chain; its full sequence is Beta,beta-carotene 15,15'-dioxygenase (547 aa).

Fe cation-binding residues include His-172, His-237, His-308, and His-514. The span at 528-540 (QAASEEQRDRASD) shows a compositional bias: basic and acidic residues. Residues 528-547 (QAASEEQRDRASDCHGAPLT) form a disordered region.

The protein belongs to the carotenoid oxygenase family. The cofactor is Fe(2+). In terms of tissue distribution, highly expressed in retinal pigment epithelium. Also expressed in kidney, testis, liver, brain, small intestine and colon.

The protein resides in the cytoplasm. The protein localises to the cytosol. The enzyme catalyses all-trans-beta-carotene + O2 = 2 all-trans-retinal. Its pathway is cofactor metabolism; retinol metabolism. In terms of biological role, symmetrically cleaves beta-carotene into two molecules of retinal using a dioxygenase mechanism. In Homo sapiens (Human), this protein is Beta,beta-carotene 15,15'-dioxygenase.